Here is a 1070-residue protein sequence, read N- to C-terminus: DNA-directed RNA polymerase subunit beta (1070 aa).

It belongs to the RNA polymerase beta chain family. As to quaternary structure, in plastids the minimal PEP RNA polymerase catalytic core is composed of four subunits: alpha, beta, beta', and beta''. When a (nuclear-encoded) sigma factor is associated with the core the holoenzyme is formed, which can initiate transcription.

The protein resides in the plastid. It is found in the chloroplast. It carries out the reaction RNA(n) + a ribonucleoside 5'-triphosphate = RNA(n+1) + diphosphate. DNA-dependent RNA polymerase catalyzes the transcription of DNA into RNA using the four ribonucleoside triphosphates as substrates. The sequence is that of DNA-directed RNA polymerase subunit beta from Gossypium hirsutum (Upland cotton).